The sequence spans 187 residues: Putative zinc finger protein 833 (187 aa).

C2H2-type zinc fingers lie at residues 10–32 (YKCKFCGKAFDNLHLYLTHERTH), 38–60 (YECNKCGKAFSCSSSIRKHARIH), 66–88 (YICKQCGKAFRYSSSIRNHENTH), 94–116 (CECKQCGKAFSYSSYFRIHERIH), 122–144 (YKCKECGKTFTYPSAFHKHKSTH), and 150–172 (YECKECGKAFDCFSSFHSHEGVH).

The sequence is that of Putative zinc finger protein 833 (ZNF833P) from Homo sapiens (Human).